A 379-amino-acid polypeptide reads, in one-letter code: MSCPYAGNGNDHDDSAVPLTTEVGKIYGEYLMLDKLLDAQCMLSEEDKRPVHDEHLFIITHQAYELWFKQIIFEFDSIRDMLDAEVIDETKTLEIVKRLNRVVLILKLLVDQVPILETMTPLDFMDFRKYLAPASGFQSLQFRLIENKLGVLTEQRVRYNQKYSDVFSDEEARNSIRNSEKDPSLLELVQRWLERTPGLEETGFNFWAKFQESVDRFLEAQVQSAMEEPVEKAKNYRLMDIEKRREVYRSIFDPAVHDALVRRGDRRFSHRALQGAIMITFYRDEPRFSQPHQLLTLLMDIDSLITKWRYNHVIMVQRMIGSQQLGTGGSSGYQYLRSTLSDRYKVFLDLFNLSTFLIPREAIPPLDETIRKKLINKSV.

Substrate contacts are provided by residues 57–61 and R128; that span reads FIITH. H312 contacts heme. A substrate-binding site is contributed by T327.

Belongs to the tryptophan 2,3-dioxygenase family. Homotetramer. Dimer of dimers. Heme is required as a cofactor.

It catalyses the reaction L-tryptophan + O2 = N-formyl-L-kynurenine. It functions in the pathway amino-acid degradation; L-tryptophan degradation via kynurenine pathway; L-kynurenine from L-tryptophan: step 1/2. The protein operates within pigment biosynthesis; ommochrome biosynthesis. In terms of biological role, heme-dependent dioxygenase that catalyzes the oxidative cleavage of the L-tryptophan (L-Trp) pyrrole ring and converts L-tryptophan to N-formyl-L-kynurenine. Catalyzes the oxidative cleavage of the indole moiety. This is Tryptophan 2,3-dioxygenase from Drosophila sechellia (Fruit fly).